A 3198-amino-acid chain; its full sequence is Helicase domino (3198 aa).

Positions 1 to 12 are enriched in gly residues; the sequence is MNEGNSAGGGHE. Disordered stretches follow at residues 1-27, 93-112, and 119-148; these read MNEGNSAGGGHEGLSPAPPAVPDRVTP, LPQQQQQTAEATAAAAAPAH, and SSTIEASVLPPQAKRQRLDDNEDRTSAASI. Over residues 134–143 the composition is skewed to basic and acidic residues; sequence QRLDDNEDRT. A coiled-coil region spans residues 187 to 212; it reads KKRILQQKLQILRNLKERHLENVSEY. 2 disordered regions span residues 256–350 and 391–474; these read TSAA…SATS and GGTP…TPNS. Composition is skewed to polar residues over residues 264–281 and 297–329; these read QNQKYTTQQTDSVESSLV and NISNSTVKTNTQSQVPSKIGSFTESTPAATESN. Low complexity predominate over residues 330–350; that stretch reads SSTTVPGTATSGAATSTSATS. A compositionally biased stretch (polar residues) spans 391–404; it reads GGTPLLPCNTSAGS. Residues 452–464 are compositionally biased toward low complexity; it reads PGTPTSGSLLSPA. The HSA domain occupies 507–579; it reads LPKLQEPSRP…QELQLKRVAS (73 aa). A disordered region spans residues 635–848; that stretch reads NKSVADTPSL…DMEEQDEQED (214 aa). The span at 638 to 650 shows a compositional bias: polar residues; that stretch reads VADTPSLNSSRLT. The segment covering 652–664 has biased composition (basic and acidic residues); it reads PKRESDDDFRPES. 3 positions are modified to phosphoserine: S656, S664, and S666. A coiled-coil region spans residues 666 to 696; sequence SEDDEETIAKAEEDAADVKEEVTALAKESEM. Basic and acidic residues-rich tracts occupy residues 672–695 and 711–721; these read TIAKAEEDAADVKEEVTALAKESE and ENRDKLMKEEQ. T729 is subject to Phosphothreonine. 3 positions are modified to phosphoserine: S733, S736, and S744. A coiled-coil region spans residues 741–784; that stretch reads KEASDDDENTISKQEEAEQEIDHKKEIDELEADNDLSVEQLLAK. Positions 753 to 767 are enriched in basic and acidic residues; the sequence is KQEEAEQEIDHKKEI. Acidic residues predominate over residues 805-831; sequence LDSDDDSTAVDSTEESEDAATEDEEDL. Position 838 is a phosphothreonine (T838). Residues 926–1091 form the Helicase ATP-binding domain; the sequence is VTMNERKLNG…WSLMHFLMPY (166 aa). 939–946 provides a ligand contact to ATP; sequence DEMGLGKT. Residues 1471 to 1492 are disordered; that stretch reads VQKQSIANGKTEPEEETEAEDP. Residues 1662 to 1812 enclose the Helicase C-terminal domain; it reads TMDRLLRQLK…DMAIEGGNFT (151 aa). Positions 1828-1856 are disordered; sequence EQSEQDESSQEKSENKDRIVATTTLSDTP. Basic and acidic residues predominate over residues 1836-1846; that stretch reads SQEKSENKDRI. Residues 1951–1996 adopt a coiled-coil conformation; that stretch reads AAWTAEQLRAAEAELEAQKREWEANRLAAMHKEEELLKQETEAEEM. The segment at 2061–2100 is disordered; it reads KEHKRSRTDAGYDGSRRPNKMRREDNYVPPRSLFDRPTPQ. Residues 2067-2086 show a composition bias toward basic and acidic residues; that stretch reads RTDAGYDGSRRPNKMRREDN. One can recognise a Myb-like domain in the interval 2136–2205; the sequence is TEPEAMAEWC…QCRWRYETHI (70 aa). Residues 2318-2362 are disordered; it reads IREKQRGQQMSQPPVGVGVVQQMQQQSQQQQQPAPPPLPQQQQPQ. The span at 2325–2349 shows a compositional bias: low complexity; sequence QQMSQPPVGVGVVQQMQQQSQQQQQ.

The protein belongs to the SNF2/RAD54 helicase family. SWR1 subfamily. As to quaternary structure, component of the Tip60 chromatin-remodeling complex which contains Domino, Tip60, Tra1, Brd8, E(Pc), DMAP1, Pontin, Reptin, Ing3, Act87E, BAP55, Mrg15, MrgBP, Gas41 and YL-1. Isoform B is present at high levels in ovary, in follicle cells, nurse cells and oocyte. Isoform B is also present in germline and somatic stem cells from the germarium. Isoform A is undetectable in adult ovary (at protein level).

It localises to the nucleus. Its function is as follows. Mediates the ATP-dependent exchange of unmodified histone H2AV for its phosphorylated and acetylated form H2AVK5acS138ph, leading to transcriptional regulation of selected genes by chromatin remodeling. Involved in Notch signaling. Represses E2F target genes. Required for somatic stem cell self-renewal but not for germline stem cell self-renewal. Involved in oogenesis. The protein is Helicase domino (dom) of Drosophila melanogaster (Fruit fly).